The sequence spans 232 residues: Dof zinc finger protein DOF4.3 (232 aa).

The Dof-type zinc-finger motif lies at 25–79 (RVCARCDSDNTKFCYYNNYSEFQPRYFCKNCRRYWTHGGALRNVPIGGSSRAKRT). 4 residues coordinate Zn(2+): Cys27, Cys30, Cys52, and Cys55.

The protein resides in the nucleus. Transcription factor that binds specifically to a 5'-AA[AG]G-3' consensus core sequence. The protein is Dof zinc finger protein DOF4.3 (DOF4.3) of Arabidopsis thaliana (Mouse-ear cress).